The sequence spans 637 residues: tRNA 5-methylaminomethyl-2-thiouridine biosynthesis bifunctional protein MnmC (637 aa).

The segment at 1 to 232 (MPERIEWLED…KRDNLQGEFN (232 aa)) is tRNA (mnm(5)s(2)U34)-methyltransferase. The FAD-dependent cmnm(5)s(2)U34 oxidoreductase stretch occupies residues 255 to 637 (IGAGLAGAAV…YGEAKLVSED (383 aa)).

The protein in the N-terminal section; belongs to the methyltransferase superfamily. tRNA (mnm(5)s(2)U34)-methyltransferase family. It in the C-terminal section; belongs to the DAO family. Requires FAD as cofactor.

It localises to the cytoplasm. It carries out the reaction 5-aminomethyl-2-thiouridine(34) in tRNA + S-adenosyl-L-methionine = 5-methylaminomethyl-2-thiouridine(34) in tRNA + S-adenosyl-L-homocysteine + H(+). Functionally, catalyzes the last two steps in the biosynthesis of 5-methylaminomethyl-2-thiouridine (mnm(5)s(2)U) at the wobble position (U34) in tRNA. Catalyzes the FAD-dependent demodification of cmnm(5)s(2)U34 to nm(5)s(2)U34, followed by the transfer of a methyl group from S-adenosyl-L-methionine to nm(5)s(2)U34, to form mnm(5)s(2)U34. The chain is tRNA 5-methylaminomethyl-2-thiouridine biosynthesis bifunctional protein MnmC from Polaromonas sp. (strain JS666 / ATCC BAA-500).